The chain runs to 412 residues: Inositol polyphosphate-5-phosphatase A (412 aa).

The S-farnesyl cysteine moiety is linked to residue Cys-409. Positions 410-412 are cleaved as a propeptide — removed in mature form; that stretch reads VVQ.

It belongs to the inositol 1,4,5-trisphosphate 5-phosphatase type I family. Interacts with TASOR. Isoprenylation at Cys-409 is required for localization at the membrane. In terms of tissue distribution, expressed at high levels in cerebellar Purkinje cells (at protein level). Expressed in Sertoli cells of the testis.

The protein localises to the cell membrane. The protein resides in the cell projection. Its subcellular location is the dendrite. It carries out the reaction 1D-myo-inositol 1,4,5-trisphosphate + H2O = 1D-myo-inositol 1,4-bisphosphate + phosphate. The catalysed reaction is 1D-myo-inositol 1,3,4,5-tetrakisphosphate + H2O = 1D-myo-inositol 1,3,4-trisphosphate + phosphate. Its function is as follows. Phosphatase that specifically hydrolyzes the 5-phosphate of inositol 1,4,5-trisphosphate to inositol 1,4-bisphosphate, and inositol 1,3,4,5-tetrasphosphate to inositol 1,3,4-trisphosphate. Plays a crucial role in the survival of cerebellar Purkinje cells. The sequence is that of Inositol polyphosphate-5-phosphatase A (Inpp5a) from Mus musculus (Mouse).